The sequence spans 252 residues: ATP synthase subunit a (252 aa).

6 consecutive transmembrane segments (helical) span residues 29–49 (FTNV…FLFI), 87–107 (FFPL…IGLF), 117–137 (IMIT…CGFY), 146–166 (LFVP…IEVI), 196–216 (FIVS…LPLI), and 219–239 (VAIT…FTVL).

Belongs to the ATPase A chain family. As to quaternary structure, F-type ATPases have 2 components, CF(1) - the catalytic core - and CF(0) - the membrane proton channel. CF(1) has five subunits: alpha(3), beta(3), gamma(1), delta(1), epsilon(1). CF(0) has three main subunits: a(1), b(2) and c(9-12). The alpha and beta chains form an alternating ring which encloses part of the gamma chain. CF(1) is attached to CF(0) by a central stalk formed by the gamma and epsilon chains, while a peripheral stalk is formed by the delta and b chains.

Its subcellular location is the cell inner membrane. In terms of biological role, key component of the proton channel; it plays a direct role in the translocation of protons across the membrane. The chain is ATP synthase subunit a from Bartonella bacilliformis (strain ATCC 35685 / KC583 / Herrer 020/F12,63).